The sequence spans 177 residues: uncharacterized protein (177 aa).

The tract at residues 1–27 (MSHSRRAAPTQDQCHTPGFPTSRETSG) is disordered.

This is an uncharacterized protein from Homo sapiens (Human).